The sequence spans 420 residues: Probable acetate kinase (420 aa).

Asparagine 10 is a binding site for Mg(2+). Lysine 17 is an ATP binding site. Arginine 97 contributes to the substrate binding site. Aspartate 153 functions as the Proton donor/acceptor in the catalytic mechanism. Histidine 213 to glycine 217 contacts ATP. Residue glutamate 403 participates in Mg(2+) binding.

It belongs to the acetokinase family. Mg(2+) is required as a cofactor.

The enzyme catalyses acetate + ATP = acetyl phosphate + ADP. It functions in the pathway metabolic intermediate biosynthesis; acetyl-CoA biosynthesis; acetyl-CoA from acetate: step 1/2. The sequence is that of Probable acetate kinase from Emericella nidulans (strain FGSC A4 / ATCC 38163 / CBS 112.46 / NRRL 194 / M139) (Aspergillus nidulans).